The sequence spans 297 residues: Large ribosomal subunit protein uL18 (297 aa).

Gly2 is modified (N-acetylglycine). An N6-acetyllysine mark is found at Lys5 and Lys48. Ser185 carries the phosphoserine modification. Residue Lys220 is modified to N6-acetyllysine; alternate. A Glycyl lysine isopeptide (Lys-Gly) (interchain with G-Cter in SUMO1); alternate cross-link involves residue Lys220. Lys220 is covalently cross-linked (Glycyl lysine isopeptide (Lys-Gly) (interchain with G-Cter in SUMO2); alternate). Phosphothreonine is present on Thr232. The disordered stretch occupies residues 253–297 (YEKKPKREVKKKRWNRPKMSLAQKKDRVAQKKASFLRAQERAAES). A compositionally biased stretch (basic residues) spans 258-268 (KREVKKKRWNR). The residue at position 272 (Ser272) is a Phosphoserine.

This sequence belongs to the universal ribosomal protein uL18 family. Component of the large ribosomal subunit (LSU). Part of the 5S RNP complex, which is a LSU subcomplex composed of the 5S RNA, RPL5 and RPL11. Component of a hexameric 5S RNP precursor complex, composed of 5S RNA, RRS1, RPF2/BXDC1, RPL5, RPL11 and HEATR3; this complex acts as a precursor for ribosome assembly. Interacts with NVL in an ATP-dependent manner. Interacts with RRP1B. Interacts with IPO5, IPO7 and KPNB1; these interactions may be involved in RPL5 nuclear import for the assembly of ribosomal subunits.

It localises to the cytoplasm. The protein resides in the nucleus. It is found in the nucleolus. Component of the ribosome, a large ribonucleoprotein complex responsible for the synthesis of proteins in the cell. The small ribosomal subunit (SSU) binds messenger RNAs (mRNAs) and translates the encoded message by selecting cognate aminoacyl-transfer RNA (tRNA) molecules. The large subunit (LSU) contains the ribosomal catalytic site termed the peptidyl transferase center (PTC), which catalyzes the formation of peptide bonds, thereby polymerizing the amino acids delivered by tRNAs into a polypeptide chain. The nascent polypeptides leave the ribosome through a tunnel in the LSU and interact with protein factors that function in enzymatic processing, targeting, and the membrane insertion of nascent chains at the exit of the ribosomal tunnel. As part of the 5S RNP/5S ribonucleoprotein particle it is an essential component of the LSU, required for its formation and the maturation of rRNAs. It also couples ribosome biogenesis to p53/TP53 activation. As part of the 5S RNP it accumulates in the nucleoplasm and inhibits MDM2, when ribosome biogenesis is perturbed, mediating the stabilization and the activation of TP53. The sequence is that of Large ribosomal subunit protein uL18 (Rpl5) from Mus musculus (Mouse).